The chain runs to 541 residues: Transmembrane protein 87A (541 aa).

The signal sequence occupies residues 1–26 (MAAASFQPLKCLLLWVFFVITPPVKA). The Lumenal portion of the chain corresponds to 27–209 (VPEPGIWTVP…HGFISASDWP (183 aa)). N-linked (GlcNAc...) asparagine glycans are attached at residues N52, N109, N148, and N189. Disulfide bonds link C65/C116 and C82/C416. The chain crosses the membrane as a helical span at residues 210–230 (LMIFYMVMCIMYILLALLWFI). The Cytoplasmic portion of the chain corresponds to 231 to 241 (WSACYWKDLLR). The chain crosses the membrane as a helical span at residues 242–262 (IQFWIAAVIFLGMLEKAVYYA). The Lumenal segment spans residues 263–293 (EYQNTDNTGVSSHGLLIFAELISSIKRTLAR). The chain crosses the membrane as a helical span at residues 294–314 (LLVTIVSLGYGIIKPRLGAVM). Over 315–316 (HR) the chain is Cytoplasmic. The chain crosses the membrane as a helical span at residues 317-337 (VVGMGVLYFVFAAVEGVMRII). The Lumenal portion of the chain corresponds to 338 to 344 (GAKEYDL). The chain crosses the membrane as a helical span at residues 345 to 365 (VLLAGIPLALLDSGLCWWIFV). Residues 366–384 (SLAQTMKTLKLRKNTVKYS) lie on the Cytoplasmic side of the membrane. Residues 385 to 405 (LYRHFTNTLIFAILASIIFMI) traverse the membrane as a helical segment. At 406–422 (WRTKKFQLVDCQADWME) the chain is on the lumenal side. A helical transmembrane segment spans residues 423-443 (LWVDDAYWRFLFFIILLVIMF). The Cytoplasmic segment spans residues 444–541 (LWRPSANNQR…MTKYEMSKIE (98 aa)).

This sequence belongs to the LU7TM family. TMEM87 subfamily.

The protein localises to the cell membrane. It is found in the golgi apparatus membrane. Potential monoatomic ion channel gated by mechanical force, implicated in normal touch sensitivity through the generation of mechanically activated currents. However, a direct channel activity is debated and an alternative could be that it functions as a chaperone for an unidentified mechanosensitive ion channel. Could also be involved in cell mechanosensitivity regulating cell adhesion and migration. May also be involved in retrograde transport from endosomes to the trans-Golgi network (TGN). This is Transmembrane protein 87A from Xenopus tropicalis (Western clawed frog).